Consider the following 397-residue polypeptide: Purine ribonucleoside efflux pump NepI (397 aa).

At 1–21 the chain is on the cytoplasmic side; the sequence is MNENIAEKFRADGVARPNWSA. Residues 22–42 form a helical membrane-spanning segment; sequence VFAVAFCVACLITVEFLPVSL. At 43-54 the chain is on the periplasmic side; the sequence is LTPMAQDLGISE. A helical membrane pass occupies residues 55-75; sequence GVAGQSVTVTAFVAMFSSLFI. The Cytoplasmic portion of the chain corresponds to 76–85; it reads TQIIQATDRR. Residues 86–106 form a helical membrane-spanning segment; the sequence is YIVILFAVLLTASCLMVSFAN. A topological domain (periplasmic) is located at residue Ser107. A helical membrane pass occupies residues 108–128; the sequence is FTLLLLGRACLGLALGGFWAM. At 129 to 147 the chain is on the cytoplasmic side; it reads SASLTMRLVPARTVPKALS. The chain crosses the membrane as a helical span at residues 148–168; the sequence is VIFGAVSIALVIAAPLGSFLG. The Periplasmic portion of the chain corresponds to 169–175; sequence GIIGWRN. The helical transmembrane segment at 176–196 threads the bilayer; the sequence is VFNAAAVMGVLCVIWVVKSLP. Over 197 to 215 the chain is Cytoplasmic; sequence SLPGEPSHQKQNMFSLLQR. Residues 216 to 236 form a helical membrane-spanning segment; it reads PGVMAGMIAIFMSFAGQFAFF. The Periplasmic segment spans residues 237–255; that stretch reads TYIRPVYMNLAGFDVDGLT. Residues 256-276 traverse the membrane as a helical segment; it reads LVLLSFGIASFVGTSFSSYVL. Topologically, residues 277-281 are cytoplasmic; the sequence is KRSVK. A helical transmembrane segment spans residues 282-302; sequence LALAGAPLLLALSALTLIVWG. Residues 303–305 lie on the Periplasmic side of the membrane; it reads SDK. The helical transmembrane segment at 306–326 threads the bilayer; sequence TVAAVIAIIWGLAFALVPVGW. The Cytoplasmic portion of the chain corresponds to 327-343; sequence STWITRSLADQAEKAGS. A helical membrane pass occupies residues 344–364; sequence IQVAVIQLANTCGAAVGGYAL. The Periplasmic segment spans residues 365 to 366; it reads DN. The helical transmembrane segment at 367–387 threads the bilayer; sequence FGLLSPLALSGGLMLLTALVV. At 388–397 the chain is on the cytoplasmic side; it reads AAKVRITPMS.

This sequence belongs to the major facilitator superfamily. DHA1 family. NepI (TC 2.A.1.2.26) subfamily.

The protein localises to the cell inner membrane. The enzyme catalyses inosine(in) + H(+)(out) = inosine(out) + H(+)(in). The catalysed reaction is guanosine(in) + H(+)(out) = guanosine(out) + H(+)(in). Involved in the efflux of purine ribonucleosides, such as inosine and guanosine. This Salmonella paratyphi B (strain ATCC BAA-1250 / SPB7) protein is Purine ribonucleoside efflux pump NepI.